The sequence spans 81 residues: Conotoxin ViKr92 (81 aa).

The N-terminal stretch at 1 to 22 (MKLTWMMIVAVLFLTAWTFVTA) is a signal peptide. A propeptide spanning residues 23–51 (DDTRYKLENPFLKARNELQKLEASQLNER) is cleaved from the precursor. Cystine bridges form between cysteine 53/cysteine 70, cysteine 60/cysteine 74, and cysteine 69/cysteine 78.

The protein belongs to the conotoxin O1 superfamily. Expressed by the venom duct.

The protein localises to the secreted. The protein is Conotoxin ViKr92 of Conus virgo (Virgin cone).